The sequence spans 349 residues: Green-sensitive opsin-3 (349 aa).

The Extracellular portion of the chain corresponds to 1–36; it reads MNGTEGNNFYIPMSNRTGLVRSPYEYPQYYLAEPWQ. 2 N-linked (GlcNAc...) asparagine glycosylation sites follow: asparagine 2 and asparagine 15. The helical transmembrane segment at 37–61 threads the bilayer; that stretch reads FKLLAVYMFFLMCFGFPINGLTLVV. At 62–73 the chain is on the cytoplasmic side; it reads TAQHKKLRQPLN. The chain crosses the membrane as a helical span at residues 74–99; the sequence is FILVNLAVAGTIMVCFGFTVTFYTAI. Residues 100-113 lie on the Extracellular side of the membrane; that stretch reads NGYFVLGPTGCAIE. Cysteine 110 and cysteine 187 form a disulfide bridge. The chain crosses the membrane as a helical span at residues 114 to 133; sequence GFMATLGGQISLWSLVVLAI. The Cytoplasmic segment spans residues 134–152; it reads ERYIVVCKPMGSFKFSSNH. Residues 153–176 traverse the membrane as a helical segment; that stretch reads AFAGIGFTWIMALSCAAPPLVGWS. Over 177 to 202 the chain is Extracellular; the sequence is RYIPEGMQCSCGPDYYTLNPDYNNES. Asparagine 200 is a glycosylation site (N-linked (GlcNAc...) asparagine). Residues 203-230 traverse the membrane as a helical segment; sequence YVLYMFCCHFIFPVTTIFFTYGRLVCTV. Residues 231–252 lie on the Cytoplasmic side of the membrane; that stretch reads KAAAAQQQESESTQKAEREVTR. Residues 253–276 traverse the membrane as a helical segment; the sequence is MVILMVLGFLVAWTPYASVAAWIF. At 277-284 the chain is on the extracellular side; that stretch reads FNRGAAFS. Residues 285–309 traverse the membrane as a helical segment; it reads AQFMAVPAFFSKSSSIFNPIIYVLL. Lysine 296 is modified (N6-(retinylidene)lysine). Topologically, residues 310-349 are cytoplasmic; that stretch reads NKQFRNCMLTTLFCGKNPLGDDESSTVSTSKTEVSSVSPA. The tract at residues 329–349 is disordered; sequence GDDESSTVSTSKTEVSSVSPA. Low complexity predominate over residues 334-349; that stretch reads STVSTSKTEVSSVSPA.

It belongs to the G-protein coupled receptor 1 family. Opsin subfamily. In terms of processing, phosphorylated on some or all of the serine and threonine residues present in the C-terminal region.

The protein localises to the membrane. Its function is as follows. Visual pigments are the light-absorbing molecules that mediate vision. They consist of an apoprotein, opsin, covalently linked to cis-retinal. The sequence is that of Green-sensitive opsin-3 (opn1mw3) from Danio rerio (Zebrafish).